A 301-amino-acid polypeptide reads, in one-letter code: Fatty acid elongase 3 (301 aa).

7 helical membrane-spanning segments follow: residues 31–51 (VPYIAGVMYLILVLYVPKSIM), 64–84 (IVWNLFLTLFSMCGAYYTVPY), 122–142 (ALADSFYFNGDVGFWVALFAL), 161–181 (VIFLHWYHHLTVMLFCWFAYV), 187–207 (GLWFASMNYSVHSIMYLYYFV), 219–239 (FAPIITFVQIFQMVVGTIVVC), and 257–277 (FSLHTGLVMYVSYLLLFSQLF). Residues 165–169 (HWYHH) carry the HxxHH motif motif. The active-site Nucleophile is the His168.

Belongs to the ELO family.

The protein localises to the endoplasmic reticulum membrane. It catalyses the reaction an acyl-CoA + malonyl-CoA + H(+) = a 3-oxoacyl-CoA + CO2 + CoA. It functions in the pathway lipid metabolism; fatty acid biosynthesis. Its function is as follows. Involved in the synthesis of fatty acids. Elongates C14 fatty acids to C18. This is Fatty acid elongase 3 from Trypanosoma brucei brucei (strain 927/4 GUTat10.1).